Consider the following 438-residue polypeptide: UDP-N-acetylmuramoylalanine--D-glutamate ligase (438 aa).

Residue 112-118 (GSNGKST) participates in ATP binding.

This sequence belongs to the MurCDEF family.

Its subcellular location is the cytoplasm. The enzyme catalyses UDP-N-acetyl-alpha-D-muramoyl-L-alanine + D-glutamate + ATP = UDP-N-acetyl-alpha-D-muramoyl-L-alanyl-D-glutamate + ADP + phosphate + H(+). It participates in cell wall biogenesis; peptidoglycan biosynthesis. Functionally, cell wall formation. Catalyzes the addition of glutamate to the nucleotide precursor UDP-N-acetylmuramoyl-L-alanine (UMA). The chain is UDP-N-acetylmuramoylalanine--D-glutamate ligase from Shigella sonnei (strain Ss046).